Here is a 119-residue protein sequence, read N- to C-terminus: Large ribosomal subunit protein uL24 (119 aa).

It belongs to the universal ribosomal protein uL24 family. In terms of assembly, part of the 50S ribosomal subunit.

One of two assembly initiator proteins, it binds directly to the 5'-end of the 23S rRNA, where it nucleates assembly of the 50S subunit. In terms of biological role, one of the proteins that surrounds the polypeptide exit tunnel on the outside of the subunit. The polypeptide is Large ribosomal subunit protein uL24 (Leifsonia xyli subsp. xyli (strain CTCB07)).